A 260-amino-acid chain; its full sequence is MIIVLSPAKSLDYETPAHVEAYTKPAFVDDASELIDGLRKLSPQDIAALMDISDPLARLNFQRYADWSSTFTPANAKQAVLAFNGDVYEGFDAKSLSSTDLDYAQQHVRVLSGLYGLLRPLDLLQPYRLEMGTRFANARGKDLYAFWGDRITRALNEQLETRSGAARVLVNCASTEYFKSVKPKLLAAPVITPVFEDWKGGRYKIISFHAKRARGLMARFVVENRITDPNALKAFSTEGYVFDAAASNDSTYVYRRRVGE.

This sequence belongs to the UPF0246 family.

In Burkholderia orbicola (strain MC0-3), this protein is UPF0246 protein Bcenmc03_2247.